The chain runs to 1495 residues: ESX secretion system protein YukB (1495 aa).

2 helical membrane-spanning segments follow: residues 246–266 and 270–290; these read LWLVILPPLVMLIVMGVVAII and GIFILVSLAMFMMTLITSTVQ. FtsK domains lie at 661–858 and 993–1177; these read KDDI…TDSK and QAPI…SEGY. ATP contacts are provided by residues 682–689 and 1010–1017; these read GTTGSGKS and GSSGYGKS.

Belongs to the EssC family.

Its subcellular location is the cell membrane. Required for YukE secretion. Probable component or regulator of the ESX/ESAT-6-like secretion system (BsEss). The polypeptide is ESX secretion system protein YukB (yukB) (Bacillus subtilis (strain 168)).